Consider the following 228-residue polypeptide: Potassium/proton antiporter CemA (228 aa).

The next 3 helical transmembrane spans lie at 6-26 (FIPLLYLTSIVFLPWWVSFSF), 113-133 (IICFVILSGYSFLVNEELFIL), and 188-208 (IISGLVSTFPVIFDTIFKYWI).

The protein belongs to the CemA family.

It localises to the plastid. Its subcellular location is the chloroplast inner membrane. The enzyme catalyses K(+)(in) + H(+)(out) = K(+)(out) + H(+)(in). Functionally, contributes to K(+)/H(+) antiport activity by supporting proton efflux to control proton extrusion and homeostasis in chloroplasts in a light-dependent manner to modulate photosynthesis. Prevents excessive induction of non-photochemical quenching (NPQ) under continuous-light conditions. Indirectly promotes efficient inorganic carbon uptake into chloroplasts. The protein is Potassium/proton antiporter CemA of Populus alba (White poplar).